We begin with the raw amino-acid sequence, 312 residues long: MSSAPPAPRVIAVVGPTAAGKSDLGVFLAQRLDGEVVNADSMQLYRGMDIGTAKLTPEERGGIPHHLLDIWDVTVAASVAEYQRLARARIDALLAEGRWPILVGGSGLYVRGAVDNLEFPGTDPEVRARLEEELALRGPGALHARLAAADPEAGHAILSSNGRRIVRALEVIEITGRPFTANLPGHDSVYDTVQIGVDVARPELDERIARRVDRMWEAGLVDEVRALEAQGLREGRTASRALGYQQVLAALAGECTEDEARAETVRATKRFARRQDSWFRRDPRVHWLSGAAADLTELPQLALMLVERPVTA.

15–22 (GPTAAGKS) is a binding site for ATP. Position 17 to 22 (17 to 22 (TAAGKS)) interacts with substrate. Residues 40–43 (DSMQ) are interaction with substrate tRNA.

The protein belongs to the IPP transferase family. In terms of assembly, monomer. It depends on Mg(2+) as a cofactor.

It carries out the reaction adenosine(37) in tRNA + dimethylallyl diphosphate = N(6)-dimethylallyladenosine(37) in tRNA + diphosphate. Its function is as follows. Catalyzes the transfer of a dimethylallyl group onto the adenine at position 37 in tRNAs that read codons beginning with uridine, leading to the formation of N6-(dimethylallyl)adenosine (i(6)A). This is tRNA dimethylallyltransferase from Streptomyces avermitilis (strain ATCC 31267 / DSM 46492 / JCM 5070 / NBRC 14893 / NCIMB 12804 / NRRL 8165 / MA-4680).